A 150-amino-acid polypeptide reads, in one-letter code: Cytochrome c-type biogenesis protein CcmE (150 aa).

The Cytoplasmic segment spans residues 1–7; that stretch reads MTRKQKR. The chain crosses the membrane as a helical; Signal-anchor for type II membrane protein span at residues 8 to 28; that stretch reads LAIIGGGVGFLTAAVLLVMFA. Residues 29–150 lie on the Periplasmic side of the membrane; sequence FSQAVAYFYV…VTLGGKENIQ (122 aa). Heme contacts are provided by H123 and Y127.

Belongs to the CcmE/CycJ family.

The protein resides in the cell inner membrane. In terms of biological role, heme chaperone required for the biogenesis of c-type cytochromes. Transiently binds heme delivered by CcmC and transfers the heme to apo-cytochromes in a process facilitated by CcmF and CcmH. This chain is Cytochrome c-type biogenesis protein CcmE, found in Sinorhizobium fredii (strain NBRC 101917 / NGR234).